The chain runs to 888 residues: Lon protease homolog 2, peroxisomal (888 aa).

In terms of domain architecture, Lon N-terminal spans 11–255 (LAILPFRNKV…KATELVDRHL (245 aa)). An ATP-binding site is contributed by 408–415 (GPPGVGKT). The 186-residue stretch at 692 to 877 (VASAGVSVGL…EDVLENAFEG (186 aa)) folds into the Lon proteolytic domain. Catalysis depends on residues S783 and K826. Residues 886–888 (SKL) carry the Microbody targeting signal motif.

Belongs to the peptidase S16 family.

It localises to the peroxisome matrix. The catalysed reaction is Hydrolysis of proteins in presence of ATP.. ATP-dependent serine protease that mediates the selective degradation of misfolded and unassembled polypeptides in the peroxisomal matrix. Necessary for type 2 peroxisome targeting signal (PTS2)-containing protein processing and facilitates peroxisome matrix protein import. The sequence is that of Lon protease homolog 2, peroxisomal (LON2) from Arabidopsis thaliana (Mouse-ear cress).